The following is a 380-amino-acid chain: Probable protein phosphatase 2C 2 (380 aa).

One can recognise a PPM-type phosphatase domain in the interval 69–339 (RSGSFADIGP…DNLTVIVICF (271 aa)). The Mn(2+) site is built by aspartate 113, glycine 114, aspartate 287, and aspartate 330.

The protein belongs to the PP2C family. Mg(2+) is required as a cofactor. Requires Mn(2+) as cofactor.

It carries out the reaction O-phospho-L-seryl-[protein] + H2O = L-seryl-[protein] + phosphate. The catalysed reaction is O-phospho-L-threonyl-[protein] + H2O = L-threonyl-[protein] + phosphate. The polypeptide is Probable protein phosphatase 2C 2 (Oryza sativa subsp. japonica (Rice)).